Consider the following 461-residue polypeptide: Cysteine--tRNA ligase (461 aa).

Residue Cys28 coordinates Zn(2+). The short motif at 30 to 40 (ITVYDLCHIGH) is the 'HIGH' region element. Cys209, His234, and Glu238 together coordinate Zn(2+). Positions 266-270 (KMSKS) match the 'KMSKS' region motif. Lys269 is an ATP binding site.

The protein belongs to the class-I aminoacyl-tRNA synthetase family. As to quaternary structure, monomer. It depends on Zn(2+) as a cofactor.

The protein resides in the cytoplasm. The enzyme catalyses tRNA(Cys) + L-cysteine + ATP = L-cysteinyl-tRNA(Cys) + AMP + diphosphate. This Escherichia fergusonii (strain ATCC 35469 / DSM 13698 / CCUG 18766 / IAM 14443 / JCM 21226 / LMG 7866 / NBRC 102419 / NCTC 12128 / CDC 0568-73) protein is Cysteine--tRNA ligase.